Consider the following 219-residue polypeptide: DAN domain family member 5 (219 aa).

A signal peptide spans 1–19; it reads MLLFRAASLLPLLCFTVGA. Disulfide bonds link cysteine 118/cysteine 165, cysteine 132/cysteine 179, cysteine 142/cysteine 195, and cysteine 146/cysteine 197. The 81-residue stretch at 118-198 folds into the CTCK domain; that stretch reads CHALPFIQNV…VELVEECECE (81 aa).

This sequence belongs to the DAN family. Interacts with nr1-a.

It localises to the secreted. Functionally, plays an important role in regulating the left-right axis by blocking a tgfb1 cascade in the right posterior paraxial mesoderm. Functions as an inhibitor of bmp, tgfb1, nodal, activin and wnt signaling in the ectoderm. May inhibit mesodermal signals, probably through an inhibition of nodal/activin pathways. Seems to regulates cell fate specification and competence before the onset of neural induction. Expression in the entire ectodermal region prior to gastrulation might act to prevent fate specification in the ectoderm and ensure the maintenance of the stem-cell-like properties exhibited by ectodermal cells. The chain is DAN domain family member 5 (dand5) from Xenopus tropicalis (Western clawed frog).